The sequence spans 480 residues: MLEFLRGRDVLVAGWGISGRSLVEPLRDIGAHPVVTDSGAKALAEAAELGLEVATSVELESADLSRFALVITSPGWRPDSPVLVSAVTEGIPVWGDVEFAWWVDQARIYGPVRKWLVVTGTNGKTTTTQMTHAILRAAGIASVACGNIGLPILDALRRNPGPQVLAVELSSFQLHWAPSVRPEAGVVLNVAEDHLDWHGGLDAYAAAKARALVGRIGVVGLDDPVAAALARRSKARRTVGFRVGVPADGELGVVDGKLLDRAFTKAAILAEVGDISPPGPAGVADALAAAALTRAIDVAPQFVKEGLQEHKVGPHRAAFVREVAGVEFIDDSKATNPHAARSSILAHPHVVWIAGGRLKGAAVEDLVEEVADRLVAAVLIGVDAPVIAAALARHAPEVPVVEVRAGDDAVMADDPLRPDEADAVMAAAVRTAAGYARAGDTVLLAPAAASLDMFADYTHRGRSFADAVHALEDGDIGRQP.

120–126 contributes to the ATP binding site; sequence GTNGKTT.

This sequence belongs to the MurCDEF family.

It is found in the cytoplasm. The catalysed reaction is UDP-N-acetyl-alpha-D-muramoyl-L-alanine + D-glutamate + ATP = UDP-N-acetyl-alpha-D-muramoyl-L-alanyl-D-glutamate + ADP + phosphate + H(+). Its pathway is cell wall biogenesis; peptidoglycan biosynthesis. Functionally, cell wall formation. Catalyzes the addition of glutamate to the nucleotide precursor UDP-N-acetylmuramoyl-L-alanine (UMA). This Nocardia farcinica (strain IFM 10152) protein is UDP-N-acetylmuramoylalanine--D-glutamate ligase.